Reading from the N-terminus, the 50-residue chain is Mast cell degranulating peptide (50 aa).

The signal sequence occupies residues 1–27 (MISMLRCTFFFLSVILITSYFVTPTMS). The residue at position 29 (Lys29) is an N6-formyllysine; partial. 2 cysteine pairs are disulfide-bonded: Cys30–Cys42 and Cys32–Cys46. N6-formyllysine; partial occurs at positions 44 and 48. Position 49 is an asparagine amide (Asn49).

In terms of tissue distribution, expressed by the venom gland.

It localises to the secreted. Potent anti-inflammatory agent. At low concentrations, mediates the degranulation of mast cells thus evoking an inflammatory response. Also acts as a neurotoxin capable of blocking a class of voltage-gated potassium channels. The chain is Mast cell degranulating peptide from Apis mellifera (Honeybee).